The following is a 262-amino-acid chain: Hydroxyethylthiazole kinase (262 aa).

Position 50 (Met-50) interacts with substrate. Positions 125 and 171 each coordinate ATP. Gly-198 provides a ligand contact to substrate.

Belongs to the Thz kinase family. Requires Mg(2+) as cofactor.

It carries out the reaction 5-(2-hydroxyethyl)-4-methylthiazole + ATP = 4-methyl-5-(2-phosphooxyethyl)-thiazole + ADP + H(+). Its pathway is cofactor biosynthesis; thiamine diphosphate biosynthesis; 4-methyl-5-(2-phosphoethyl)-thiazole from 5-(2-hydroxyethyl)-4-methylthiazole: step 1/1. Its function is as follows. Catalyzes the phosphorylation of the hydroxyl group of 4-methyl-5-beta-hydroxyethylthiazole (THZ). The protein is Hydroxyethylthiazole kinase of Escherichia fergusonii (strain ATCC 35469 / DSM 13698 / CCUG 18766 / IAM 14443 / JCM 21226 / LMG 7866 / NBRC 102419 / NCTC 12128 / CDC 0568-73).